A 449-amino-acid polypeptide reads, in one-letter code: Glycine receptor subunit alpha-2 (449 aa).

The first 27 residues, 1 to 27 (MTRPSVKLLTTLLACLMEMLNFRVSSG), serve as a signal peptide directing secretion. Residues 28–255 (KDPDLLSSSS…FHLERQMGYY (228 aa)) lie on the Extracellular side of the membrane. N-linked (GlcNAc...) asparagine glycosylation is present at Asn-70. Glycine is bound by residues Arg-97 and Ser-161. A strychnine-binding site is contributed by Arg-97. A disulfide bridge links Cys-170 with Cys-184. Glu-224 and Asp-226 together coordinate Zn(2+). A disulfide bridge connects residues Cys-230 and Cys-241. Thr-236 contributes to the glycine binding site. A Zn(2+)-binding site is contributed by His-247. Residues 256 to 276 (LIQMYIPSLLIVILSWVSFWI) form a helical membrane-spanning segment. Residues 277 to 282 (NMDAAP) lie on the Cytoplasmic side of the membrane. A helical membrane pass occupies residues 283 to 302 (ARVALGITTVLTMTTQSSGS). Over 303–313 (RASLPKVSYVK) the chain is Extracellular. Residues 314-334 (AIDIWMAVCLLFVFAALLEYA) traverse the membrane as a helical segment. Over 335–420 (GVNFVSRQQK…RAKRIDTISR (86 aa)) the chain is Cytoplasmic. Residues 421–441 (AAFPLAFLIFNVFYWITYKII) traverse the membrane as a helical segment. Residues 442–449 (RHESARKD) are Extracellular-facing.

Belongs to the ligand-gated ion channel (TC 1.A.9) family.

It is found in the postsynaptic cell membrane. The protein resides in the synapse. The protein localises to the cell membrane. It localises to the cell projection. It catalyses the reaction chloride(in) = chloride(out). With respect to regulation, channel opening is triggered by extracellular glycine. Channel opening is also triggered by taurine and beta-alanine. Inhibited by strychnine. In terms of biological role, subunit of heteromeric glycine-gated chloride channels. Plays a role in synaptic plasticity. Contributes to the generation of inhibitory postsynaptic currents, and is involved in the down-regulation of neuronal excitability. This chain is Glycine receptor subunit alpha-2 (glra2), found in Danio rerio (Zebrafish).